A 459-amino-acid polypeptide reads, in one-letter code: MSSGRIVQIIGAVIDVEFPRDSVPSIYNALEVKSAAGTTLEVQQQLGDGVVRTIAMGSTEGLKRGLEVTDSGAAISVPVGKATLGRIMDVLGNPIDEAGPIATEERWGIHRPAPSFAEQAGGNDLLETGIKVIDLVCPFAKGGKVGLFGGAGVGKTVNMMELIRNIAIEHSGYSVFAGVGERTREGNDFYHEMKDSNVLDKVALVYGQMNEPPGNRLRVALTGLTMAEKFRDEGNDVLLFVDNIYRYTLAGTEVSALLGRMPSAVGYQPTLAEEMGTLQERITSTKNGSITSIQAVYVPADDLTDPSPATTFAHLDATVVLSRDIASLGIYPAVDPLDSTSRQLDPNVIGQEHYDTARGVQYVLQRYKELKDIIAILGMDELSETDKQLVNRARKIQRFLSQPFFVAEVFTGASGKYVSLKDTIAGFKGILNGDYDHLPEQAFYMVGGIEEAIEKAKKL.

Position 149 to 156 (149 to 156 (GGAGVGKT)) interacts with ATP.

The protein belongs to the ATPase alpha/beta chains family. As to quaternary structure, F-type ATPases have 2 components, CF(1) - the catalytic core - and CF(0) - the membrane proton channel. CF(1) has five subunits: alpha(3), beta(3), gamma(1), delta(1), epsilon(1). CF(0) has three main subunits: a(1), b(2) and c(9-12). The alpha and beta chains form an alternating ring which encloses part of the gamma chain. CF(1) is attached to CF(0) by a central stalk formed by the gamma and epsilon chains, while a peripheral stalk is formed by the delta and b chains.

Its subcellular location is the cell inner membrane. The enzyme catalyses ATP + H2O + 4 H(+)(in) = ADP + phosphate + 5 H(+)(out). Functionally, produces ATP from ADP in the presence of a proton gradient across the membrane. The catalytic sites are hosted primarily by the beta subunits. The chain is ATP synthase subunit beta from Pseudomonas syringae pv. tomato (strain ATCC BAA-871 / DC3000).